The sequence spans 58 residues: Metallothionein (58 aa).

A beta region spans residues 1 to 29; that stretch reads PDPCCAEGTCECEEGKCKAGCKCTSCRCS. A divalent metal cation contacts are provided by Cys4, Cys5, Cys10, Cys12, Cys17, Cys21, Cys23, Cys26, Cys28, Cys31, Cys34, Cys38, Cys40, Cys46, Cys50, Cys54, Cys56, and Cys57. Residues 30–58 form an alpha region; the sequence is PCEKCTSECECKSKEECAKNCTKPCSCCP.

In terms of biological role, metallothioneins have a high content of cysteine residues that bind various heavy metals. Class I MTS in crustacea are involved in the sequestration of elevated levels of heavy-metal ions. This chain is Metallothionein, found in Potamon potamios.